The chain runs to 133 residues: DNA-directed RNA polymerase subunit omega (133 aa).

It belongs to the RNA polymerase subunit omega family. In terms of assembly, the RNAP catalytic core consists of 2 alpha, 1 beta, 1 beta' and 1 omega subunit. When a sigma factor is associated with the core the holoenzyme is formed, which can initiate transcription.

It carries out the reaction RNA(n) + a ribonucleoside 5'-triphosphate = RNA(n+1) + diphosphate. Promotes RNA polymerase assembly. Latches the N- and C-terminal regions of the beta' subunit thereby facilitating its interaction with the beta and alpha subunits. The chain is DNA-directed RNA polymerase subunit omega from Mesorhizobium japonicum (strain LMG 29417 / CECT 9101 / MAFF 303099) (Mesorhizobium loti (strain MAFF 303099)).